The primary structure comprises 601 residues: Elongation factor 4 (601 aa).

The region spanning 5 to 187 (IRKKNFCIIA…AICKHVPSPR (183 aa)) is the tr-type G domain. GTP-binding positions include 17-22 (DHGKST) and 134-137 (NKID).

Belongs to the TRAFAC class translation factor GTPase superfamily. Classic translation factor GTPase family. LepA subfamily.

It is found in the cell inner membrane. It carries out the reaction GTP + H2O = GDP + phosphate + H(+). Functionally, required for accurate and efficient protein synthesis under certain stress conditions. May act as a fidelity factor of the translation reaction, by catalyzing a one-codon backward translocation of tRNAs on improperly translocated ribosomes. Back-translocation proceeds from a post-translocation (POST) complex to a pre-translocation (PRE) complex, thus giving elongation factor G a second chance to translocate the tRNAs correctly. Binds to ribosomes in a GTP-dependent manner. The protein is Elongation factor 4 of Borrelia garinii subsp. bavariensis (strain ATCC BAA-2496 / DSM 23469 / PBi) (Borreliella bavariensis).